The following is a 160-amino-acid chain: Phosphopantetheine adenylyltransferase (160 aa).

Threonine 10 serves as a coordination point for substrate. ATP contacts are provided by residues 10–11 and histidine 18; that span reads TF. Residues lysine 42, leucine 74, and arginine 88 each contribute to the substrate site. ATP is bound by residues 89-91, glutamate 99, and 124-130; these read GLR and NSFISST.

It belongs to the bacterial CoaD family. As to quaternary structure, homohexamer. Mg(2+) serves as cofactor.

The protein localises to the cytoplasm. The enzyme catalyses (R)-4'-phosphopantetheine + ATP + H(+) = 3'-dephospho-CoA + diphosphate. It functions in the pathway cofactor biosynthesis; coenzyme A biosynthesis; CoA from (R)-pantothenate: step 4/5. In terms of biological role, reversibly transfers an adenylyl group from ATP to 4'-phosphopantetheine, yielding dephospho-CoA (dPCoA) and pyrophosphate. The sequence is that of Phosphopantetheine adenylyltransferase from Pseudoalteromonas atlantica (strain T6c / ATCC BAA-1087).